Reading from the N-terminus, the 300-residue chain is UDP-N-acetylenolpyruvoylglucosamine reductase (300 aa).

The region spanning 28–193 (KTGGPADVLA…LQATFALEKG (166 aa)) is the FAD-binding PCMH-type domain. The active site involves Arg-172. Catalysis depends on Ser-222, which acts as the Proton donor. The active site involves Glu-292.

Belongs to the MurB family. Requires FAD as cofactor.

It localises to the cytoplasm. The catalysed reaction is UDP-N-acetyl-alpha-D-muramate + NADP(+) = UDP-N-acetyl-3-O-(1-carboxyvinyl)-alpha-D-glucosamine + NADPH + H(+). Its pathway is cell wall biogenesis; peptidoglycan biosynthesis. Its function is as follows. Cell wall formation. The polypeptide is UDP-N-acetylenolpyruvoylglucosamine reductase (Enterococcus faecalis (strain ATCC 700802 / V583)).